The primary structure comprises 281 residues: 4-diphosphocytidyl-2-C-methyl-D-erythritol kinase (281 aa).

K15 is an active-site residue. 98 to 108 lines the ATP pocket; sequence PTGAGLGGGSS. D140 is a catalytic residue.

This sequence belongs to the GHMP kinase family. IspE subfamily.

The enzyme catalyses 4-CDP-2-C-methyl-D-erythritol + ATP = 4-CDP-2-C-methyl-D-erythritol 2-phosphate + ADP + H(+). The protein operates within isoprenoid biosynthesis; isopentenyl diphosphate biosynthesis via DXP pathway; isopentenyl diphosphate from 1-deoxy-D-xylulose 5-phosphate: step 3/6. Catalyzes the phosphorylation of the position 2 hydroxy group of 4-diphosphocytidyl-2C-methyl-D-erythritol. The sequence is that of 4-diphosphocytidyl-2-C-methyl-D-erythritol kinase from Neisseria meningitidis serogroup C (strain 053442).